The primary structure comprises 542 residues: Chaperonin GroEL (542 aa).

Residues 29 to 32 (TLGP), 86 to 90 (DGTTT), glycine 413, 476 to 478 (NAA), and aspartate 492 contribute to the ATP site.

Belongs to the chaperonin (HSP60) family. As to quaternary structure, forms a cylinder of 14 subunits composed of two heptameric rings stacked back-to-back. Interacts with the co-chaperonin GroES.

The protein localises to the cytoplasm. It catalyses the reaction ATP + H2O + a folded polypeptide = ADP + phosphate + an unfolded polypeptide.. In terms of biological role, together with its co-chaperonin GroES, plays an essential role in assisting protein folding. The GroEL-GroES system forms a nano-cage that allows encapsulation of the non-native substrate proteins and provides a physical environment optimized to promote and accelerate protein folding. This is Chaperonin GroEL from Lactococcus lactis subsp. cremoris (strain MG1363).